Here is a 484-residue protein sequence, read N- to C-terminus: Signal transduction histidine-protein kinase/phosphatase MprB (484 aa).

The segment covering 1–10 (MAADNAGRWP) has biased composition (low complexity). The interval 1 to 23 (MAADNAGRWPGQPPGPPAPTHPA) is disordered. The Cytoplasmic portion of the chain corresponds to 1 to 31 (MAADNAGRWPGQPPGPPAPTHPASSVSLRWR). Residues 11–20 (GQPPGPPAPT) are compositionally biased toward pro residues. Residues 32-52 (VMLLAMSMVVISVVLMAVAVF) form a helical membrane-spanning segment. The Extracellular segment spans residues 53-172 (AVTSRALYDD…TGKVLKRLGT (120 aa)). The helical transmembrane segment at 173–193 (VLLIVGGLGVAVAAIAGGMVA) threads the bilayer. One can recognise an HAMP domain in the interval 194-246 (SAGLRPVGRLTQAAERVARTDDLRPIPVIGNDELARLTETFNMMLRALAESRE). Residues 194–484 (SAGLRPVGRL…SPAGSDEAER (291 aa)) lie on the Cytoplasmic side of the membrane. A Histidine kinase domain is found at 254–474 (DAGHELRTPL…AMHVVLPGRP (221 aa)). At His-257 the chain carries Phosphohistidine; by autocatalysis.

Requires Mg(2+) as cofactor. It depends on Mn(2+) as a cofactor. Autophosphorylated.

The protein resides in the cell membrane. It carries out the reaction ATP + protein L-histidine = ADP + protein N-phospho-L-histidine.. Functionally, member of the two-component regulatory system MprB/MprA which contributes to maintaining a balance among several systems involved in stress resistance and is required for establishment and maintenance of persistent infection in the host. In response to environmental signals MprB acts both as a membrane-associated protein kinase that undergoes autophosphorylation and subsequently transfers the phosphate to MprA, and a protein phosphatase that dephosphorylates phospho-MprA. The sequence is that of Signal transduction histidine-protein kinase/phosphatase MprB (mprB) from Mycolicibacterium vanbaalenii (strain DSM 7251 / JCM 13017 / BCRC 16820 / KCTC 9966 / NRRL B-24157 / PYR-1) (Mycobacterium vanbaalenii).